A 747-amino-acid polypeptide reads, in one-letter code: DNA ligase 1 (747 aa).

The disordered stretch occupies residues 1-84 (MQKSITSFFK…KEVDDKTTDK (84 aa)). Phosphoserine is present on residues Ser18, Ser20, Ser42, Ser44, Ser46, Ser60, and Ser65. Over residues 26–42 (PKIDAKTELPDEPHIKS) the composition is skewed to basic and acidic residues. Over residues 60 to 84 (SEEKTSPVKNVKKEPKEVDDKTTDK) the composition is skewed to basic and acidic residues. The active-site N6-AMP-lysine intermediate is the Lys395. Residues 725–740 (QSQDQVKNNQKSSTQM) are compositionally biased toward polar residues. The tract at residues 725–747 (QSQDQVKNNQKSSTQMEMEDEFY) is disordered.

The protein belongs to the ATP-dependent DNA ligase family.

Its subcellular location is the nucleus. It carries out the reaction ATP + (deoxyribonucleotide)n-3'-hydroxyl + 5'-phospho-(deoxyribonucleotide)m = (deoxyribonucleotide)n+m + AMP + diphosphate.. Functionally, DNA ligase that seals nicks in double-stranded DNA during DNA replication, DNA recombination and DNA repair. This Drosophila melanogaster (Fruit fly) protein is DNA ligase 1.